The chain runs to 514 residues: Prolyl 3,4-dihydroxylase OGFOD1 (514 aa).

The region spanning 114 to 221 (GAVDCSCNIY…RVSISGWFHT (108 aa)) is the Fe2OG dioxygenase domain. Positions 132 and 134 each coordinate Fe cation. Tyr-146 contributes to the 2-oxoglutarate binding site. His-200 contacts Fe cation. Residue Arg-212 participates in 2-oxoglutarate binding.

Belongs to the TPA1 family. In terms of assembly, monomer and homodimer. The cofactor is Fe(2+). It depends on L-ascorbate as a cofactor.

It catalyses the reaction [ribosomal protein uS12]-L-proline + 2-oxoglutarate + O2 = [ribosomal protein uS12]-(3S)-3-hydroxy-L-proline + succinate + CO2. It carries out the reaction [ribosomal protein uS12]-(3S)-3-hydroxy-L-proline + 2-oxoglutarate + O2 = [ribosomal protein uS12]-(3S)-3,4-dihydroxy-L-proline + succinate + CO2. Functionally, prolyl 3,4-dihydroxylase that catalyzes 3,4-dihydroxylation of 'Pro-61' of small ribosomal subunit uS12 (RPS23), thereby regulating protein translation termination efficiency. This is Prolyl 3,4-dihydroxylase OGFOD1 (Ogd) from Ostreococcus tauri.